Reading from the N-terminus, the 429-residue chain is UDP-N-acetylglucosamine 1-carboxyvinyltransferase (429 aa).

22–23 is a phosphoenolpyruvate binding site; the sequence is KN. Position 93 (R93) interacts with UDP-N-acetyl-alpha-D-glucosamine. The active-site Proton donor is C117. C117 is subject to 2-(S-cysteinyl)pyruvic acid O-phosphothioketal. Residues 122–126, D313, and I335 contribute to the UDP-N-acetyl-alpha-D-glucosamine site; that span reads RPVDQ.

The protein belongs to the EPSP synthase family. MurA subfamily.

It localises to the cytoplasm. The catalysed reaction is phosphoenolpyruvate + UDP-N-acetyl-alpha-D-glucosamine = UDP-N-acetyl-3-O-(1-carboxyvinyl)-alpha-D-glucosamine + phosphate. It functions in the pathway cell wall biogenesis; peptidoglycan biosynthesis. Its function is as follows. Cell wall formation. Adds enolpyruvyl to UDP-N-acetylglucosamine. This chain is UDP-N-acetylglucosamine 1-carboxyvinyltransferase, found in Variovorax paradoxus (strain S110).